A 291-amino-acid polypeptide reads, in one-letter code: Protein US2 (291 aa).

Position 2 is an N-acetylglycine; by host; partial (Gly2). The tract at residues 251-270 is disordered; the sequence is PEVPDEQPTSPGRGPQETDP.

The protein belongs to the herpesviridae HHV-1 US2 protein family. As to quaternary structure, interacts with host KRT18.

It is found in the host cytoplasm. The protein resides in the host nucleus. The polypeptide is Protein US2 (Homo sapiens (Human)).